The chain runs to 325 residues: Protein TMED8 (325 aa).

The segment at 1–78 (MSDLQAAEGP…MVSPVSKDAT (78 aa)) is disordered. One can recognise a GOLD domain in the interval 159 to 323 (PPCIWTFAKV…NKTLYFHIYY (165 aa)). Lys169 carries the post-translational modification N6-acetyllysine. Residues 232 to 267 (TVQVSDSSDDEDEEEEEEEEIEEPVPAGDVERGSRS) are disordered. The segment covering 238–254 (SSDDEDEEEEEEEEIEE) has biased composition (acidic residues).

The sequence is that of Protein TMED8 (TMED8) from Homo sapiens (Human).